A 517-amino-acid chain; its full sequence is General transcription factor IIF subunit 1 (517 aa).

A2 carries the post-translational modification N-acetylalanine. Residue T156 is modified to Phosphothreonine. The segment at 178–458 is disordered; that stretch reads QQRRLKDQDQ…SGDVQVTEDA (281 aa). Positions 210-225 are enriched in acidic residues; it reads LEDDLEMSSDDSEASG. 4 positions are modified to phosphoserine: S217, S218, S221, and S224. A compositionally biased stretch (basic residues) spans 232-251; the sequence is PKAKKKAPPSKGGRKKKKKK. Composition is skewed to acidic residues over residues 255-270 and 303-325; these read DEAFEDSDDGDFEGQE and EQSESSEESEEEKPPEEDKEEEE. Position 331 is a phosphothreonine (T331). Acidic residues predominate over residues 343-355; the sequence is EESDSSEESDIDS. Over residues 364–374 the composition is skewed to basic residues; that stretch reads AKKKTPPKRER. A phosphoserine mark is found at S377, S380, S381, and S385. Positions 377–391 are enriched in low complexity; it reads SGGSSRGNSRPGTPS. T389 carries the phosphothreonine modification. At S391 the chain carries Phosphoserine. Residues 392 to 401 show a composition bias toward polar residues; it reads TEAGSTSSTL. An N6-acetyllysine modification is found at K407. Over residues 428-452 the composition is skewed to polar residues; the sequence is GPQSLSGKSTPQPQSGKSTPSSGDV. S431, S433, and S436 each carry phosphoserine. T437 and T446 each carry phosphothreonine. S449 is modified (phosphoserine).

This sequence belongs to the TFIIF alpha subunit family. As to quaternary structure, heterodimer of an alpha and a beta subunit. Interacts with GTF2F2, CTDP1, TAF6/TAFII80 and URI1. Interacts with GTF2B (via C-terminus and preferentially via acetylated form); this interaction prevents binding of GTF2B to GTF2F2. Part of TBP-based Pol II pre-initiation complex (PIC), in which Pol II core assembles with general transcription factors and other specific initiation factors including GTF2E1, GTF2E2, GTF2F1, GTF2F2, TCEA1, ERCC2, ERCC3, GTF2H2, GTF2H3, GTF2H4, GTF2H5, GTF2A1, GTF2A2, GTF2B and TBP; this large multi-subunit PIC complex mediates DNA unwinding and targets Pol II core to the transcription start site where the first phosphodiester bond forms. Phosphorylated on Ser and other residues by TAF1 and casein kinase II-like kinases.

It is found in the nucleus. TFIIF is a general transcription initiation factor that binds to RNA polymerase II and helps to recruit it to the initiation complex in collaboration with TFIIB. It promotes transcription elongation. The sequence is that of General transcription factor IIF subunit 1 (GTF2F1) from Bos taurus (Bovine).